The following is a 468-amino-acid chain: Uronate isomerase (468 aa).

This sequence belongs to the metallo-dependent hydrolases superfamily. Uronate isomerase family.

It catalyses the reaction D-glucuronate = D-fructuronate. It carries out the reaction aldehydo-D-galacturonate = keto-D-tagaturonate. Its pathway is carbohydrate metabolism; pentose and glucuronate interconversion. This Bacteroides fragilis (strain ATCC 25285 / DSM 2151 / CCUG 4856 / JCM 11019 / LMG 10263 / NCTC 9343 / Onslow / VPI 2553 / EN-2) protein is Uronate isomerase.